The primary structure comprises 495 residues: tRNA-guanine(15) transglycosylase (495 aa).

The active-site Nucleophile is the D83. D118 serves as a coordination point for substrate. Zn(2+) is bound by residues C273 and C278.

This sequence belongs to the archaeosine tRNA-ribosyltransferase family. Zn(2+) serves as cofactor.

The catalysed reaction is guanosine(15) in tRNA + 7-cyano-7-deazaguanine = 7-cyano-7-carbaguanosine(15) in tRNA + guanine. Its pathway is tRNA modification; archaeosine-tRNA biosynthesis. In terms of biological role, exchanges the guanine residue with 7-cyano-7-deazaguanine (preQ0) at position 15 in the dihydrouridine loop (D-loop) of archaeal tRNAs. The polypeptide is tRNA-guanine(15) transglycosylase (Pyrobaculum aerophilum (strain ATCC 51768 / DSM 7523 / JCM 9630 / CIP 104966 / NBRC 100827 / IM2)).